Here is a 222-residue protein sequence, read N- to C-terminus: Phosphoribosylformylglycinamidine synthase subunit PurQ (222 aa).

Positions 3–222 (AAVVVFPGSN…RALTGALAAV (220 aa)) constitute a Glutamine amidotransferase type-1 domain. Cys-86 (nucleophile) is an active-site residue. Catalysis depends on residues His-194 and Glu-196.

Part of the FGAM synthase complex composed of 1 PurL, 1 PurQ and 2 PurS subunits.

The protein resides in the cytoplasm. The catalysed reaction is N(2)-formyl-N(1)-(5-phospho-beta-D-ribosyl)glycinamide + L-glutamine + ATP + H2O = 2-formamido-N(1)-(5-O-phospho-beta-D-ribosyl)acetamidine + L-glutamate + ADP + phosphate + H(+). The enzyme catalyses L-glutamine + H2O = L-glutamate + NH4(+). Its pathway is purine metabolism; IMP biosynthesis via de novo pathway; 5-amino-1-(5-phospho-D-ribosyl)imidazole from N(2)-formyl-N(1)-(5-phospho-D-ribosyl)glycinamide: step 1/2. Functionally, part of the phosphoribosylformylglycinamidine synthase complex involved in the purines biosynthetic pathway. Catalyzes the ATP-dependent conversion of formylglycinamide ribonucleotide (FGAR) and glutamine to yield formylglycinamidine ribonucleotide (FGAM) and glutamate. The FGAM synthase complex is composed of three subunits. PurQ produces an ammonia molecule by converting glutamine to glutamate. PurL transfers the ammonia molecule to FGAR to form FGAM in an ATP-dependent manner. PurS interacts with PurQ and PurL and is thought to assist in the transfer of the ammonia molecule from PurQ to PurL. In Roseobacter denitrificans (strain ATCC 33942 / OCh 114) (Erythrobacter sp. (strain OCh 114)), this protein is Phosphoribosylformylglycinamidine synthase subunit PurQ.